Here is a 64-residue protein sequence, read N- to C-terminus: Small ribosomal subunit protein bS21 (64 aa).

It belongs to the bacterial ribosomal protein bS21 family.

The chain is Small ribosomal subunit protein bS21 from Anaeromyxobacter dehalogenans (strain 2CP-1 / ATCC BAA-258).